The chain runs to 766 residues: FYVE, RhoGEF and PH domain-containing protein 4 (766 aa).

The tract at residues 1 to 150 (MEESNPAPTS…SSVTNSHDEN (150 aa)) is actin filament-binding. Polar residues-rich tracts occupy residues 43–65 (STMN…TPQK), 132–145 (RNET…SVTN), and 152–161 (CDSSCRTQGT). The segment at 43–167 (STMNLNIPQT…TQGTDLGLPS (125 aa)) is disordered. Residues 206–393 (KLHKIATELL…STAASHSNSA (188 aa)) enclose the DH domain. Positions 422–521 (ELIKEGQILK…WIKALQESID (100 aa)) constitute a PH 1 domain. The segment at 559–619 (DNEVTMCMKC…VCKDCYQIMS (61 aa)) adopts an FYVE-type zinc-finger fold. Residues Cys-565, Cys-568, Cys-582, Cys-585, Cys-590, Cys-593, Cys-611, and Cys-614 each contribute to the Zn(2+) site. A PH 2 domain is found at 643-740 (NSEVCSFLQY…WLKIILLAVT (98 aa)). Residues Ser-702 and Ser-716 each carry the phosphoserine modification. The interval 745-766 (DGPSEHLDTLDNLPGPKEKSEC) is disordered.

As to quaternary structure, homooligomer. Detected in brain, lung, liver, skeletal muscle, kidney, testis and cultured hippocampal neurons.

The protein resides in the cytoplasm. It is found in the cytoskeleton. It localises to the cell projection. The protein localises to the filopodium. Functionally, activates CDC42, a member of the Ras-like family of Rho- and Rac proteins, by exchanging bound GDP for free GTP. Plays a role in regulating the actin cytoskeleton and cell shape. Activates MAPK8. In Rattus norvegicus (Rat), this protein is FYVE, RhoGEF and PH domain-containing protein 4 (Fgd4).